The chain runs to 606 residues: Arginine--tRNA ligase (606 aa).

Positions 126–136 (PNTNKPLHLGH) match the 'HIGH' region motif.

The protein belongs to the class-I aminoacyl-tRNA synthetase family. In terms of assembly, monomer.

It localises to the cytoplasm. The catalysed reaction is tRNA(Arg) + L-arginine + ATP = L-arginyl-tRNA(Arg) + AMP + diphosphate. The protein is Arginine--tRNA ligase of Phocaeicola vulgatus (strain ATCC 8482 / DSM 1447 / JCM 5826 / CCUG 4940 / NBRC 14291 / NCTC 11154) (Bacteroides vulgatus).